Consider the following 543-residue polypeptide: MAQQEAEILRPLANFSPSLWGDQFIKNDSDAKVRYIFHYVDYTNLSMLTATGTKMVDTMNLIDTLERLGVSYHFEHEIEEILQQFFNLNTDYNDEAYDLYTVATHFRLFRQHGHRITCADIFGRWRDENGKFHEGLKDDAKGLLSLYEASYLRTRGETILDEALDFTTASLKSIAPNLESPLRRQVEHALVQQLHWGNPRIEARNFISLYEEYEDKDESLLRFAKLDYNLLQMMHKEELHEVSRWWKELDLVAKLPYARDRVVECFFWAMGVYHEPQYSRARVMLTKTIAMTSIIDDTYDAYGTIEELDIFTEAIERWNVEEMKRLPEYIKPFYKALLELYEQFEEELAKEGRSYATHYAIESLKELVRSYHVEAKWFIQGYLPPFEEYLKNALITCTYCYHTTTSLLGVESAVREDFEWLSKKPKMLVAGLLICRVIDDIATYEVEKDRGQIATGIESYMRDNGATKEEAITKFFEIANDAWKDINEECMRPSPHSRDVLMRILNLERIIDVTYKGNEDGYTQPEKVLKPHIIALFVDPIQI.

Asp-296, Asp-300, Asp-439, and Glu-447 together coordinate Mg(2+). Residues 296-300 (DDTYD) carry the DDXXD motif motif.

The protein belongs to the terpene synthase family. Tpsa subfamily. Mg(2+) serves as cofactor. Mn(2+) is required as a cofactor. Barely detectable in leaves.

The protein resides in the plastid. It localises to the chloroplast. It carries out the reaction (2E,6E)-farnesyl diphosphate = germacrene A + diphosphate. It catalyses the reaction (2E,6E)-farnesyl diphosphate = (1S,2S,4R)-beta-elemene + diphosphate. Its pathway is secondary metabolite biosynthesis; terpenoid biosynthesis. Its function is as follows. Sesquiterpene synthase involved in the biosynthesis of volatile compounds widely used in aromatherapy and folk medicine, and present in culinary herbs. Mediates the conversion of (2E,6E)-farnesyl diphosphate (FPP) into germacrene A and beta-elemene. Not able to use (2E)-geranyl diphosphate (GPP) as substrate. This chain is Germacrene A synthase, found in Lavandula viridis (Green lavender).